Consider the following 930-residue polypeptide: Nonribosomal peptide synthetase btyA (930 aa).

Positions 31–440 are adenylation (A) domain; sequence ESPHRLTYAE…RGRSKELICI (410 aa). One can recognise a Carrier domain in the interval 570–647; the sequence is PAGNETETLL…VLARQLQDGH (78 aa). Position 607 is an O-(pantetheine 4'-phosphoryl)serine (Ser607). Residues 667–920 form a thioesterase (TE) domain region; that stretch reads PLWLIHPIGG…EDNVHKVYRV (254 aa).

The protein belongs to the NRP synthetase family.

It carries out the reaction 2 3-(4-hydroxyphenyl)pyruvate + H(+) = (2S)-2-(4-hydoxybenzyl)-3-(4-hydroxyphenyl)-2-furonol carboxylate + H2O. Its pathway is secondary metabolite biosynthesis. In terms of biological role, nonribosomal peptide synthetase; part of the gene cluster that mediates the biosynthesis of butyrolactones, natural products that show a wide range of biological activities such as antitumor, antiparasitic or anti-inflammatory activity. The nonribosomal peptide synthetase btyA is responsible for the production of butyrolactone II, the core structure of butyrolactones. BtyA first activates 4-hydroxyphenylpyruvate (HPPA) through its A domain to AMP-HPPA. The HPPA unit is then loaded to the T domain and eventually transferred to the TE domain. Upon loading of another HPPA unit to the T domain, the TE domain promotes the enolate formation on the unit attached. Then aldol condensation establishes the carbon-carbon bond between the two units, followed by ester cyclization, and keto-enol tautomerization to yield the gamma-butyrolactone core. Hydrolysis, and finally esterification of the exposed carboxylic acid group yields butyrolactone II. Two additional enzymes, a prenyltransferase and an epoxidase, may be involved in the tailoring modifications of butyrolactone II to give butyrolactone III and butyrolactone I. In Aspergillus terreus (strain NIH 2624 / FGSC A1156), this protein is Nonribosomal peptide synthetase btyA.